A 173-amino-acid polypeptide reads, in one-letter code: FMN reductase (NADH) RutF 2 (173 aa).

The protein belongs to the non-flavoprotein flavin reductase family. RutF subfamily.

The enzyme catalyses FMNH2 + NAD(+) = FMN + NADH + 2 H(+). Its function is as follows. Catalyzes the reduction of FMN to FMNH2 which is used to reduce pyrimidine by RutA via the Rut pathway. In Rhizobium rhizogenes (strain K84 / ATCC BAA-868) (Agrobacterium radiobacter), this protein is FMN reductase (NADH) RutF 2.